Here is an 831-residue protein sequence, read N- to C-terminus: Probable beta-glucosidase H (831 aa).

Asparagine 13 is a glycosylation site (N-linked (GlcNAc...) asparagine). Residue aspartate 225 is part of the active site. Residues 389 to 549 enclose the PA14 domain; the sequence is RLLSNAVIHF…DAEEMINRAV (161 aa). N-linked (GlcNAc...) asparagine glycosylation is found at asparagine 474, asparagine 514, asparagine 604, asparagine 629, asparagine 726, and asparagine 823.

This sequence belongs to the glycosyl hydrolase 3 family.

Its subcellular location is the secreted. The enzyme catalyses Hydrolysis of terminal, non-reducing beta-D-glucosyl residues with release of beta-D-glucose.. The protein operates within glycan metabolism; cellulose degradation. Beta-glucosidases are one of a number of cellulolytic enzymes involved in the degradation of cellulosic biomass. Catalyzes the last step releasing glucose from the inhibitory cellobiose. The protein is Probable beta-glucosidase H (bglH) of Emericella nidulans (strain FGSC A4 / ATCC 38163 / CBS 112.46 / NRRL 194 / M139) (Aspergillus nidulans).